Reading from the N-terminus, the 749-residue chain is Protein O-mannosyl-transferase 2 (749 aa).

Residues 1-30 form a disordered region; that stretch reads MAASVVKTPKCPRRGSAKEQQSKASPKSNN. A helical membrane pass occupies residues 34-54; the sequence is NWHWWILLASVFLITFATRFY. Asn78, Asn104, and Asn117 each carry an N-linked (GlcNAc...) asparagine glycan. 5 helical membrane passes run 126–146, 173–193, 204–224, 226–246, and 266–286; these read YFCT…VYDL, ILLD…MVKI, SVRW…TISV, FVGL…LWLI, and IALI…HLSV. Asn288 and Asn312 each carry an N-linked (GlcNAc...) asparagine glycan. MIR domains are found at residues 316 to 372, 382 to 438, and 443 to 499; these read PRDV…IKPH, LQLL…VLIV, and NETV…VEDN. N-linked (GlcNAc...) asparagine glycosylation occurs at Asn443. Transmembrane regions (helical) follow at residues 572–592, 645–665, 669–689, and 703–723; these read IWWS…GNAI, LGAA…FWAM, LYFH…GVMF, and VLLG…SPLA. Asn735 carries an N-linked (GlcNAc...) asparagine glycan.

The protein belongs to the glycosyltransferase 39 family. As to quaternary structure, interacts with Rt/POMT1.

The protein localises to the endoplasmic reticulum membrane. It carries out the reaction a di-trans,poly-cis-dolichyl beta-D-mannosyl phosphate + L-seryl-[protein] = 3-O-(alpha-D-mannosyl)-L-seryl-[protein] + a di-trans,poly-cis-dolichyl phosphate + H(+). It catalyses the reaction a di-trans,poly-cis-dolichyl beta-D-mannosyl phosphate + L-threonyl-[protein] = 3-O-(alpha-D-mannosyl)-L-threonyl-[protein] + a di-trans,poly-cis-dolichyl phosphate + H(+). The protein operates within protein modification; protein glycosylation. Rt/POMT1 and tw/POMT2 function as a protein O-mannosyltransferase in association with each other to generate and maintain normal muscle development. The polypeptide is Protein O-mannosyl-transferase 2 (Drosophila pseudoobscura pseudoobscura (Fruit fly)).